We begin with the raw amino-acid sequence, 671 residues long: Carbohydrate acetyl esterase/feruloyl esterase (671 aa).

The N-terminal stretch at 1–24 (MYQSTLKTILLASALLILPASMSA) is a signal peptide. A carbohydrate acetyl esterase region spans residues 1–296 (MYQSTLKTIL…YGEAVARHLG (296 aa)). Catalysis depends on for acetyl esterase activity residues serine 55, aspartate 271, and histidine 274. The interval 297 to 671 (YEPKRPYIEM…NEFIPHLFKK (375 aa)) is feruloyl esterase.

In the N-terminal section; belongs to the carbohydrate esterase 6 family.

The enzyme catalyses feruloyl-polysaccharide + H2O = ferulate + polysaccharide.. It participates in glycan degradation; xylan degradation. Involved in degradation of plant cell wall polysaccharides. Bifunctional esterase that possesses both acetyl esterase and ferulic acid esterase activities. Has deacetylase activity towards acetylated xylo-oligosaccharides smaller than xylo-heptaose, as well as from glucose-pentaacetate. Is also able to release ferulic acid from methylferulate, and from the more natural substrates wheat bran, corn fiber, and XOS(FA,Ac), a corn fiber-derived substrate enriched in O-acetyl and ferulic acid esters. In Xylanibacter ruminicola (strain ATCC 19189 / DSM 19721 / CIP 105475 / JCM 8958 / 23) (Prevotella ruminicola), this protein is Carbohydrate acetyl esterase/feruloyl esterase.